The following is a 322-amino-acid chain: Mitochondrial uncoupling protein 4 (322 aa).

Solcar repeat units lie at residues 20 to 114 (SKFL…LREV), 124 to 216 (YPLW…VKHY), and 225 to 316 (DNIS…IREM). 6 helical membrane-spanning segments follow: residues 22 to 39 (FLLS…TFPL), 87 to 108 (WQGV…MVTY), 126 to 143 (LWKS…GQFL), 194 to 211 (PNIQ…TTYD), 228 to 247 (STHG…LGTP), and 287 to 310 (SLYK…WLTY).

Belongs to the mitochondrial carrier (TC 2.A.29) family. As to quaternary structure, homotetramer.

The protein localises to the mitochondrion inner membrane. It is found in the cell projection. Its subcellular location is the neuron projection. It catalyses the reaction H(+)(in) = H(+)(out). It carries out the reaction chloride(in) = chloride(out). Functionally, facilitates proton transport across the inner mitochondrial membrane and may dissipate excessive proton gradient associated with oxidative and metabolic stress at neuronal synapses. Regulates glutamate-induced proton conductance in astrocytes, shifting the energy metabolism toward aerobic glycolysis and lactate transfer to neurons for ATP synthesis. Can transport chloride ions with lower efficiency. The transport mechanism remains to be elucidated. The protein is Mitochondrial uncoupling protein 4 of Mus musculus (Mouse).